A 332-amino-acid chain; its full sequence is Fructose-1,6-bisphosphatase class 1 (332 aa).

Positions 89, 110, 112, and 113 each coordinate Mg(2+). Substrate-binding positions include 113–116 (DGSS), Asn-206, Tyr-239, 257–259 (YLY), and Lys-269. Glu-275 is a binding site for Mg(2+).

The protein belongs to the FBPase class 1 family. In terms of assembly, homotetramer. The cofactor is Mg(2+).

The protein localises to the cytoplasm. The catalysed reaction is beta-D-fructose 1,6-bisphosphate + H2O = beta-D-fructose 6-phosphate + phosphate. It functions in the pathway carbohydrate biosynthesis; gluconeogenesis. The chain is Fructose-1,6-bisphosphatase class 1 from Cronobacter sakazakii (strain ATCC BAA-894) (Enterobacter sakazakii).